We begin with the raw amino-acid sequence, 79 residues long: MNRTNKLILGAVVLGSALLAGCSSNAKIDQLSSDVQTLSAKVDQLSNDVNAMRSDIQAAKDDAARANQRLDNKVSRVRK.

The N-terminal stretch at 1-21 (MNRTNKLILGAVVLGSALLAG) is a signal peptide. Residue C22 is the site of N-palmitoyl cysteine attachment. C22 carries the S-diacylglycerol cysteine lipid modification. 2 repeats span residues 25-35 (NAKIDQLSSDV) and 39-49 (SAKVDQLSNDV). A coiled-coil region spans residues 28–76 (IDQLSSDVQTLSAKVDQLSNDVNAMRSDIQAAKDDAARANQRLDNKVSR). Residues 60–79 (KDDAARANQRLDNKVSRVRK) are disordered. Position 79 is an N6-murein peptidoglycan lysine (K79).

The protein belongs to the Lpp family. In terms of assembly, homotrimer.

Its subcellular location is the cell outer membrane. It is found in the secreted. The protein localises to the cell wall. Functionally, a highly abundant outer membrane lipoprotein that controls the distance between the inner and outer membranes. The only protein known to be covalently linked to the peptidoglycan network (PGN). Also non-covalently binds the PGN. The link between the cell outer membrane and PGN contributes to maintenance of the structural and functional integrity of the cell envelope, and maintains the correct distance between the PGN and the outer membrane. This is Major outer membrane lipoprotein Lpp 2 from Salmonella paratyphi A (strain ATCC 9150 / SARB42).